A 144-amino-acid polypeptide reads, in one-letter code: Large ribosomal subunit protein uL16 (144 aa).

Residues 1–17 (MLQPKKTKFRRQQKGRA) show a composition bias toward basic residues. The disordered stretch occupies residues 1-22 (MLQPKKTKFRRQQKGRAKGNAQ).

This sequence belongs to the universal ribosomal protein uL16 family. Part of the 50S ribosomal subunit.

Its function is as follows. Binds 23S rRNA and is also seen to make contacts with the A and possibly P site tRNAs. The sequence is that of Large ribosomal subunit protein uL16 from Bacteroides thetaiotaomicron (strain ATCC 29148 / DSM 2079 / JCM 5827 / CCUG 10774 / NCTC 10582 / VPI-5482 / E50).